A 266-amino-acid polypeptide reads, in one-letter code: Glucosamine-6-phosphate deaminase (266 aa).

The active-site Proton acceptor; for enolization step is the Asp72. The For ring-opening step role is filled by Asp141. The active-site Proton acceptor; for ring-opening step is the His143. The active-site For ring-opening step is the Glu148.

Belongs to the glucosamine/galactosamine-6-phosphate isomerase family. NagB subfamily. As to quaternary structure, homohexamer; trimer of disulfide-linked dimers.

It carries out the reaction alpha-D-glucosamine 6-phosphate + H2O = beta-D-fructose 6-phosphate + NH4(+). The protein operates within amino-sugar metabolism; N-acetylneuraminate degradation; D-fructose 6-phosphate from N-acetylneuraminate: step 5/5. With respect to regulation, allosterically activated by N-acetylglucosamine 6-phosphate (GlcNAc6P). Functionally, catalyzes the reversible isomerization-deamination of glucosamine 6-phosphate (GlcN6P) to form fructose 6-phosphate (Fru6P) and ammonium ion. This is Glucosamine-6-phosphate deaminase from Shigella flexneri serotype 5b (strain 8401).